Here is a 74-residue protein sequence, read N- to C-terminus: uncharacterized protein (74 aa).

This is an uncharacterized protein from Vaccinia virus (strain Copenhagen) (VACV).